Reading from the N-terminus, the 325-residue chain is Casein kinase I isoform alpha (325 aa).

Ala2 carries the post-translational modification N-acetylalanine. Residue Ser4 is modified to Phosphoserine. An N6-acetyllysine modification is found at Lys8. Residues 17-285 (YKLVRKIGSG…YLRQLFRILF (269 aa)) enclose the Protein kinase domain. ATP-binding positions include 23-31 (IGSGSFGDI) and Lys46. Asp136 functions as the Proton acceptor in the catalytic mechanism. Ile156 bears the Phosphoserine mark.

It belongs to the protein kinase superfamily. CK1 Ser/Thr protein kinase family. Casein kinase I subfamily. Interacts with the Axin complex. Interacts with TUT1, leading to TUT1 phosphorylation. Interacts with FAM83A, FAM83B, FAM83C, FAM83D, FAM83E, FAM83F, FAM83G and FAM83H (via DUF1669). Interaction with FAM83H recruits CSNK1A1 to keratin filaments. In terms of processing, phosphorylated by MTOR in response to mitogenic stimulation, leading to its activation.

It localises to the cytoplasm. Its subcellular location is the cytoskeleton. The protein resides in the microtubule organizing center. It is found in the centrosome. The protein localises to the chromosome. It localises to the centromere. Its subcellular location is the kinetochore. The protein resides in the nucleus speckle. It is found in the cilium basal body. The protein localises to the spindle. It carries out the reaction L-seryl-[protein] + ATP = O-phospho-L-seryl-[protein] + ADP + H(+). The enzyme catalyses L-threonyl-[protein] + ATP = O-phospho-L-threonyl-[protein] + ADP + H(+). Its function is as follows. Casein kinases are operationally defined by their preferential utilization of acidic proteins such as caseins as substrates. Can phosphorylate a large number of proteins. Participates in Wnt signaling. Phosphorylates CTNNB1 at 'Ser-45'. May phosphorylate PER1 and PER2. May play a role in segregating chromosomes during mitosis. May play a role in keratin cytoskeleton disassembly and thereby, it may regulate epithelial cell migration. Acts as a positive regulator of mTORC1 and mTORC2 signaling in response to nutrients by mediating phosphorylation of DEPTOR inhibitor. Acts as an inhibitor of NLRP3 inflammasome assembly by mediating phosphorylation of NLRP3. The sequence is that of Casein kinase I isoform alpha (Csnk1a1) from Rattus norvegicus (Rat).